A 183-amino-acid chain; its full sequence is Oleosin 5 (183 aa).

Residues Met1–Ala39 form a polar region. 3 helical membrane passes run Val37 to Thr57, Met66 to Ile86, and Gly87 to Met107. The segment at Val40–Tyr113 is hydrophobic. Positions Lys144 to Thr183 are disordered.

Belongs to the oleosin family.

It localises to the lipid droplet. The protein localises to the membrane. May have a structural role to stabilize the lipid body during desiccation of the seed by preventing coalescence of the oil. Probably interacts with both lipid and phospholipid moieties of lipid bodies. May also provide recognition signals for specific lipase anchorage in lipolysis during seedling growth. The sequence is that of Oleosin 5 from Arabidopsis thaliana (Mouse-ear cress).